The following is a 236-amino-acid chain: Purine nucleoside phosphorylase DeoD-type 2 (236 aa).

His5 is an a purine D-ribonucleoside binding site. Phosphate is bound by residues Gly21, Arg25, Arg44, and 88-91; that span reads RVGT. A purine D-ribonucleoside contacts are provided by residues 180 to 182 and 204 to 205; these read EME and SD. The Proton donor role is filled by Asp205.

It belongs to the PNP/UDP phosphorylase family. As to quaternary structure, homohexamer; trimer of homodimers.

It carries out the reaction a purine D-ribonucleoside + phosphate = a purine nucleobase + alpha-D-ribose 1-phosphate. It catalyses the reaction a purine 2'-deoxy-D-ribonucleoside + phosphate = a purine nucleobase + 2-deoxy-alpha-D-ribose 1-phosphate. Functionally, catalyzes the reversible phosphorolytic breakdown of the N-glycosidic bond in the beta-(deoxy)ribonucleoside molecules, with the formation of the corresponding free purine bases and pentose-1-phosphate. This chain is Purine nucleoside phosphorylase DeoD-type 2, found in Shewanella oneidensis (strain ATCC 700550 / JCM 31522 / CIP 106686 / LMG 19005 / NCIMB 14063 / MR-1).